Consider the following 348-residue polypeptide: RNA 3'-terminal phosphate cyclase (348 aa).

ATP is bound by residues Gln101 and 286 to 289 (HMAD). His312 acts as the Tele-AMP-histidine intermediate in catalysis.

It belongs to the RNA 3'-terminal cyclase family. Type 1 subfamily.

Its subcellular location is the cytoplasm. The catalysed reaction is a 3'-end 3'-phospho-ribonucleotide-RNA + ATP = a 3'-end 2',3'-cyclophospho-ribonucleotide-RNA + AMP + diphosphate. Functionally, catalyzes the conversion of 3'-phosphate to a 2',3'-cyclic phosphodiester at the end of RNA. The mechanism of action of the enzyme occurs in 3 steps: (A) adenylation of the enzyme by ATP; (B) transfer of adenylate to an RNA-N3'P to produce RNA-N3'PP5'A; (C) and attack of the adjacent 2'-hydroxyl on the 3'-phosphorus in the diester linkage to produce the cyclic end product. The biological role of this enzyme is unknown but it is likely to function in some aspects of cellular RNA processing. The protein is RNA 3'-terminal phosphate cyclase of Pyrobaculum aerophilum (strain ATCC 51768 / DSM 7523 / JCM 9630 / CIP 104966 / NBRC 100827 / IM2).